The chain runs to 345 residues: Tetraacyldisaccharide 4'-kinase (345 aa).

61–68 (TAGGTGKT) lines the ATP pocket.

Belongs to the LpxK family.

The catalysed reaction is a lipid A disaccharide + ATP = a lipid IVA + ADP + H(+). The protein operates within glycolipid biosynthesis; lipid IV(A) biosynthesis; lipid IV(A) from (3R)-3-hydroxytetradecanoyl-[acyl-carrier-protein] and UDP-N-acetyl-alpha-D-glucosamine: step 6/6. In terms of biological role, transfers the gamma-phosphate of ATP to the 4'-position of a tetraacyldisaccharide 1-phosphate intermediate (termed DS-1-P) to form tetraacyldisaccharide 1,4'-bis-phosphate (lipid IVA). The polypeptide is Tetraacyldisaccharide 4'-kinase (Xanthomonas axonopodis pv. citri (strain 306)).